The primary structure comprises 198 residues: Recombination protein RecR (198 aa).

Residues 57–72 (CSVCGHITDRDPCYIC) form a C4-type zinc finger. The Toprim domain maps to 80–175 (SVVCVVQEPK…KVTRIAHGLP (96 aa)).

Belongs to the RecR family.

Its function is as follows. May play a role in DNA repair. It seems to be involved in an RecBC-independent recombinational process of DNA repair. It may act with RecF and RecO. This is Recombination protein RecR from Bacillus thuringiensis (strain Al Hakam).